The sequence spans 209 residues: Pyridoxine/pyridoxamine 5'-phosphate oxidase (209 aa).

Substrate contacts are provided by residues 7 to 10 (REDY) and K64. Residues 59–64 (RIVLLK), 74–75 (FT), R80, and K81 contribute to the FMN site. Residues Y121, R125, and S129 each contribute to the substrate site. FMN is bound by residues 138–139 (QS) and W182. 188–190 (RLH) contacts substrate. Residue R192 coordinates FMN.

This sequence belongs to the pyridoxamine 5'-phosphate oxidase family. Homodimer. The cofactor is FMN.

The enzyme catalyses pyridoxamine 5'-phosphate + O2 + H2O = pyridoxal 5'-phosphate + H2O2 + NH4(+). It carries out the reaction pyridoxine 5'-phosphate + O2 = pyridoxal 5'-phosphate + H2O2. It participates in cofactor metabolism; pyridoxal 5'-phosphate salvage; pyridoxal 5'-phosphate from pyridoxamine 5'-phosphate: step 1/1. It functions in the pathway cofactor metabolism; pyridoxal 5'-phosphate salvage; pyridoxal 5'-phosphate from pyridoxine 5'-phosphate: step 1/1. In terms of biological role, catalyzes the oxidation of either pyridoxine 5'-phosphate (PNP) or pyridoxamine 5'-phosphate (PMP) into pyridoxal 5'-phosphate (PLP). This Actinobacillus pleuropneumoniae serotype 7 (strain AP76) protein is Pyridoxine/pyridoxamine 5'-phosphate oxidase.